The following is a 370-amino-acid chain: Aminomethyltransferase (370 aa).

It belongs to the GcvT family. As to quaternary structure, the glycine cleavage system is composed of four proteins: P, T, L and H.

The catalysed reaction is N(6)-[(R)-S(8)-aminomethyldihydrolipoyl]-L-lysyl-[protein] + (6S)-5,6,7,8-tetrahydrofolate = N(6)-[(R)-dihydrolipoyl]-L-lysyl-[protein] + (6R)-5,10-methylene-5,6,7,8-tetrahydrofolate + NH4(+). Its function is as follows. The glycine cleavage system catalyzes the degradation of glycine. The sequence is that of Aminomethyltransferase from Leptospira biflexa serovar Patoc (strain Patoc 1 / Ames).